A 270-amino-acid polypeptide reads, in one-letter code: Elongation factor Ts (270 aa).

Positions 81 to 84 are involved in Mg(2+) ion dislocation from EF-Tu; that stretch reads TDFV.

Belongs to the EF-Ts family.

It is found in the cytoplasm. Associates with the EF-Tu.GDP complex and induces the exchange of GDP to GTP. It remains bound to the aminoacyl-tRNA.EF-Tu.GTP complex up to the GTP hydrolysis stage on the ribosome. The polypeptide is Elongation factor Ts (Wigglesworthia glossinidia brevipalpis).